Consider the following 124-residue polypeptide: Prefoldin subunit beta (124 aa).

This sequence belongs to the prefoldin subunit beta family. Heterohexamer of two alpha and four beta subunits.

The protein localises to the cytoplasm. Molecular chaperone capable of stabilizing a range of proteins. Seems to fulfill an ATP-independent, HSP70-like function in archaeal de novo protein folding. The sequence is that of Prefoldin subunit beta from Pyrobaculum arsenaticum (strain DSM 13514 / JCM 11321 / PZ6).